A 288-amino-acid polypeptide reads, in one-letter code: 11-beta-hydroxysteroid dehydrogenase 1 (288 aa).

Residues 1-4 (MKKY) are Cytoplasmic-facing. Residues 5-20 (LLPVLVLCLGYYYSTN) form a helical; Signal-anchor for type II membrane protein membrane-spanning segment. Topologically, residues 21–288 (EEFRPEMLQG…SYNRDLFVSN (268 aa)) are lumenal. NADP(+) contacts are provided by residues 37–63 (GASK…TARS), 88–89 (TM), and 115–117 (NHI). Asn158 carries an N-linked (GlcNAc...) asparagine glycan. Ser166 lines the substrate pocket. The active-site Proton acceptor is Tyr179. 179–183 (YSASK) serves as a coordination point for NADP(+). Asn203 carries an N-linked (GlcNAc...) asparagine glycan. Residues 212–218 (GFIDTET) and 214–218 (IDTET) each bind NADP(+).

The protein belongs to the short-chain dehydrogenases/reductases (SDR) family. As to quaternary structure, homodimer. Post-translationally, glycosylated. Liver, kidney, lung and testis. Brain. Expressed in liver (at protein level).

The protein localises to the endoplasmic reticulum membrane. The catalysed reaction is an 11beta-hydroxysteroid + NADP(+) = an 11-oxosteroid + NADPH + H(+). It catalyses the reaction corticosterone + NADP(+) = 11-dehydrocorticosterone + NADPH + H(+). It carries out the reaction a 7beta-hydroxysteroid + NADP(+) = a 7-oxosteroid + NADPH + H(+). The enzyme catalyses 7-oxocholesterol + NADPH + H(+) = 7beta-hydroxycholesterol + NADP(+). The catalysed reaction is chenodeoxycholate + NADP(+) = 7-oxolithocholate + NADPH + H(+). It catalyses the reaction 7-oxolithocholate + NADPH + H(+) = ursodeoxycholate + NADP(+). It carries out the reaction glycochenodeoxycholate + NADP(+) = 7-oxoglycolithocholate + NADPH + H(+). The enzyme catalyses taurochenodeoxycholate + NADP(+) = 7-oxotaurolithocholate + NADPH + H(+). The catalysed reaction is tauroursodeoxycholate + NADP(+) = 7-oxotaurolithocholate + NADPH + H(+). It catalyses the reaction glycoursodeoxycholate + NADP(+) = 7-oxoglycolithocholate + NADPH + H(+). It carries out the reaction 7-oxopregnenolone + NADPH + H(+) = 7beta-hydroxypregnenolone + NADP(+). The enzyme catalyses 3beta,7alpha-dihydroxyandrost-5-en-17-one + NADP(+) = 3beta-hydroxy-5-androstene-7,17-dione + NADPH + H(+). The catalysed reaction is 3beta-hydroxy-5-androstene-7,17-dione + NADPH + H(+) = 3beta,7beta-dihydroxyandrost-5-en-17-one + NADP(+). It catalyses the reaction 3beta-hydroxy-5alpha-androstane-7,17-dione + NADPH + H(+) = 3beta,7beta-dihydroxy-5alpha-androstan-17-one + NADP(+). Its function is as follows. Controls the reversible conversion of biologically active glucocorticoids such as 11-dehydrocorticosterone to corticosterone using NADP(H). Participates in the corticosteroid receptor-mediated anti-inflammatory response, as well as metabolic and homeostatic processes. Bidirectional in vitro, predominantly functions as a reductase in vivo, thereby increasing the concentration of active glucocorticoids. It has broad substrate specificity, besides glucocorticoids, it accepts other steroid and sterol substrates. Interconverts 7-oxo- and 7-hydroxy-neurosteroids such as 7-oxopregnenolone and 7beta-hydroxypregnenolone, 7-oxodehydroepiandrosterone (3beta-hydroxy-5-androstene-7,17-dione) and 7beta-hydroxydehydroepiandrosterone (3beta,7beta-dihydroxyandrost-5-en-17-one), among others. Catalyzes the stereo-specific conversion of the major dietary oxysterol, 7-ketocholesterol (7-oxocholesterol), into the more polar 7-beta-hydroxycholesterol metabolite. 7-oxocholesterol is one of the most important oxysterols, it participates in several events such as induction of apoptosis, accumulation in atherosclerotic lesions, lipid peroxidation, and induction of foam cell formation. Mediates the 7-oxo reduction of 7-oxolithocholate mainly to chenodeoxycholate, and to a lesser extent to ursodeoxycholate, both in its free form and when conjugated to glycine or taurine, providing a link between glucocorticoid activation and bile acid metabolism. Catalyzes the synthesis of 7-beta-25-dihydroxycholesterol from 7-oxo-25-hydroxycholesterol in vitro, which acts as a ligand for the G-protein-coupled receptor (GPCR) Epstein-Barr virus-induced gene 2 (EBI2) and may thereby regulate immune cell migration. The protein is 11-beta-hydroxysteroid dehydrogenase 1 of Rattus norvegicus (Rat).